The primary structure comprises 359 residues: Heme A synthase (359 aa).

5 helical membrane-spanning segments follow: residues 8–28 (IMSI…VVGG), 94–114 (LLGR…CYLK), 124–144 (LLLI…MVKS), 159–179 (GHLL…LIII), and 215–235 (IIIF…GLDA). Histidine 274 serves as a coordination point for heme. The next 3 helical transmembrane spans lie at 276–296 (WFGI…IILN), 303–323 (MGMV…ITLL), and 328–348 (ILAA…FLFI). A heme-binding site is contributed by histidine 334.

The protein belongs to the COX15/CtaA family. Type 2 subfamily. Interacts with CtaB. The cofactor is heme b.

It is found in the cell membrane. It carries out the reaction Fe(II)-heme o + 2 A + H2O = Fe(II)-heme a + 2 AH2. It functions in the pathway porphyrin-containing compound metabolism; heme A biosynthesis; heme A from heme O: step 1/1. Catalyzes the conversion of heme O to heme A by two successive hydroxylations of the methyl group at C8. The first hydroxylation forms heme I, the second hydroxylation results in an unstable dihydroxymethyl group, which spontaneously dehydrates, resulting in the formyl group of heme A. The sequence is that of Heme A synthase from Orientia tsutsugamushi (strain Boryong) (Rickettsia tsutsugamushi).